The sequence spans 92 residues: Large ribosomal subunit protein eL43z (92 aa).

A C4-type zinc finger spans residues 39-60 (CEFCGKYSVKRKVVGIWGCKDC).

This sequence belongs to the eukaryotic ribosomal protein eL43 family.

This chain is Large ribosomal subunit protein eL43z (RPL37AB), found in Arabidopsis thaliana (Mouse-ear cress).